The sequence spans 207 residues: N-(5'-phosphoribosyl)anthranilate isomerase (207 aa).

This sequence belongs to the TrpF family.

It carries out the reaction N-(5-phospho-beta-D-ribosyl)anthranilate = 1-(2-carboxyphenylamino)-1-deoxy-D-ribulose 5-phosphate. Its pathway is amino-acid biosynthesis; L-tryptophan biosynthesis; L-tryptophan from chorismate: step 3/5. The sequence is that of N-(5'-phosphoribosyl)anthranilate isomerase from Petrotoga mobilis (strain DSM 10674 / SJ95).